The following is a 223-amino-acid chain: Cytidylate kinase (223 aa).

17–25 (GPTASGKGT) contacts ATP.

Belongs to the cytidylate kinase family. Type 1 subfamily.

It localises to the cytoplasm. It catalyses the reaction CMP + ATP = CDP + ADP. The enzyme catalyses dCMP + ATP = dCDP + ADP. This is Cytidylate kinase from Bordetella bronchiseptica (strain ATCC BAA-588 / NCTC 13252 / RB50) (Alcaligenes bronchisepticus).